Here is a 1097-residue protein sequence, read N- to C-terminus: RE1-silencing transcription factor (1097 aa).

Residues 32-122 (DLHDLSKAEL…SLELSVVEPQ (91 aa)) form an interaction with SIN3A region. An interaction with SIN3B region spans residues 43–57 (APQLIMLANVALTGE). 2 disordered regions span residues 83 to 103 (NFSDSEEGEGLEESADIKGEP) and 127 to 159 (ASGAPDIYSSNKDLPPETPGAEDKGKSSKTKPF). A compositionally biased stretch (acidic residues) spans 86 to 96 (DSEEGEGLEES). The segment at 145 to 418 (PGAEDKGKSS…KSKHPTCPNK (274 aa)) is interaction with ZFP90. The C2H2-type 1 zinc finger occupies 159 to 181 (FRCKPCQYEAESEEQFVHHIRVH). The tract at residues 201–212 (SGSSTAEEGDFS) is required for binding to the neuron-restrictive silencer element. C2H2-type zinc fingers lie at residues 216 to 238 (IRCDRCGYNTNRYDHYTAHLKHH), 248 to 270 (YKCIICTYTTVSEYHWRKHLRNH), 276 to 298 (YTCGKCNYFSDRKNNYVQHVRTH), 304 to 326 (YKCELCPYSSSQKTHLTRHMRTH), 332 to 355 (FKCDQCSYVASNQHEVTRHARQVH), 361 to 383 (LNCPHCDYKTADRSNFKKHVELH), and 389 to 412 (FNCPVCDYAASKKCNLQYHFKSKH). Over residues 452 to 479 (KIKGDVAGKKNEKSVKAEKRDVSKEKKP) the composition is skewed to basic and acidic residues. Disordered stretches follow at residues 452-642 (KIKG…MEGA), 774-837 (KEPV…EQVL), 853-938 (ESVS…NGKH), and 961-1049 (GINS…NAKE). The segment covering 480–490 (SNNVSVIQVTT) has biased composition (polar residues). 2 stretches are compositionally biased toward basic and acidic residues: residues 495–504 (SVTEVKEMDV) and 559–570 (PKGDSKVEENKK). Over residues 577–593 (KSTKKKTLKNKSSKKSS) the composition is skewed to basic residues. The segment covering 803 to 836 (PPLHMEPISKKPPLRKDKKEKSNMQSERARKEQV) has biased composition (basic and acidic residues). A Phosphoserine modification is found at serine 864. A compositionally biased stretch (polar residues) spans 913–930 (INESTHISSSGQNLNTPE). Serine 971 is modified (phosphoserine). An interaction with RCOR1 region spans residues 1009 to 1087 (EGIHSHEGSD…HLNRHLVNVY (79 aa)). The C2H2-type 9 zinc finger occupies 1060–1082 (FVCIFCDRSFRKGKDYSKHLNRH).

As to quaternary structure, isoform 1 and isoform 3 form heterodimers. Isoform 3: Forms homodimers and homooligomers; binds to the neuron-restrictive silencer element (NRSE) as monomer. Interacts with SIN3A, SIN3B and RCOR1. Interacts with CDYL. Interacts with EHMT1 and EHMT2 only in the presence of CDYL. Part of a complex containing at least CDYL, REST, WIZ, SETB1, EHMT1 and EHMT2. Interacts (via zinc-finger DNA-binding domain) with ZFP90 (via N- and C-termini); the interaction inhibits REST repressor activity. Interacts (via C2H2-type zinc finger 5) with PRICKLE1. Interacts with FBXW11 and BTRC. Interacts with USP7. Post-translationally, O-glycosylated. In terms of processing, phosphorylated; phosphorylation is required for ubiquitination. Ubiquitinated; ubiquitination is mediated by BTRC and leads to proteasomal degradation in G2 phase. Ubiquitination increases during neuronal differentiation. Deubiquitinated by USP7; leading to its stabilization and promoting the maintenance of neural progenitor cells. In terms of tissue distribution, expressed in neurons of the prefrontal cortex, in hippocampal pyramidal neurons, dentate gyrus granule neurons and cerebellar Purkinje and granule neurons (at protein level). Expressed in dopaminergic neurons of the substantia nigra (at protein level). Expressed in neural progenitor cells (at protein level). In patients suffering from Alzheimer disease, frontotemporal dementia or dementia with Lewy bodies, decreased nuclear levels have been observed in neurons of the prefrontal cortex and the hippocampus, but not in neurons of the dentate gyrus and cerebellum (at protein level). In patients with Parkinson disease or dementia with Lewy bodies, decreased nuclear levels have been observed in dopaminergic neurons and in cortical neurons and localization to Lewy bodies and pale bodies was detected (at protein level). Expressed at higher levels in weakly invasive breast cancer cell lines and at lower levels in highly invasive breast cancer lines (at protein level). Ubiquitous. Expressed at higher levels in the tissues of the lymphocytic compartment, including spleen, thymus, peripheral blood lymphocytes and ovary.

The protein resides in the nucleus. The protein localises to the cytoplasm. In terms of biological role, transcriptional repressor which binds neuron-restrictive silencer element (NRSE) and represses neuronal gene transcription in non-neuronal cells. Restricts the expression of neuronal genes by associating with two distinct corepressors, SIN3A and RCOR1, which in turn recruit histone deacetylase to the promoters of REST-regulated genes. Mediates repression by recruiting the BHC complex at RE1/NRSE sites which acts by deacetylating and demethylating specific sites on histones, thereby acting as a chromatin modifier. Transcriptional repression by REST-CDYL via the recruitment of histone methyltransferase EHMT2 may be important in transformation suppression. Represses the expression of SRRM4 in non-neural cells to prevent the activation of neural-specific splicing events and to prevent production of REST isoform 3. Repressor activity may be inhibited by forming heterodimers with isoform 3, thereby preventing binding to NRSE or binding to corepressors and leading to derepression of target genes. Also maintains repression of neuronal genes in neural stem cells, and allows transcription and differentiation into neurons by dissociation from RE1/NRSE sites of target genes. Thereby is involved in maintaining the quiescent state of adult neural stem cells and preventing premature differentiation into mature neurons. Plays a role in the developmental switch in synaptic NMDA receptor composition during postnatal development, by repressing GRIN2B expression and thereby altering NMDA receptor properties from containing primarily GRIN2B to primarily GRIN2A subunits. Acts as a regulator of osteoblast differentiation. Key repressor of gene expression in hypoxia; represses genes in hypoxia by direct binding to an RE1/NRSE site on their promoter regions. May also function in stress resistance in the brain during aging; possibly by regulating expression of genes involved in cell death and in the stress response. Repressor of gene expression in the hippocampus after ischemia by directly binding to RE1/NRSE sites and recruiting SIN3A and RCOR1 to promoters of target genes, thereby promoting changes in chromatin modifications and ischemia-induced cell death. After ischemia, might play a role in repression of miR-132 expression in hippocampal neurons, thereby leading to neuronal cell death. Negatively regulates the expression of SRRM3 in breast cancer cell lines. Binds to the 3' region of the neuron-restrictive silencer element (NRSE), with lower affinity than full-length REST isoform 1. Exhibits weaker repressor activity compared to isoform 1. May negatively regulate the repressor activity of isoform 1 by binding to isoform 1, thereby preventing its binding to NRSE and leading to derepression of target genes. However, in another study, does not appear to be implicated in repressor activity of a NRSE motif-containing reporter construct nor in inhibitory activity on the isoform 1 transcriptional repressor activity. Post-transcriptional inactivation of REST by SRRM4-dependent alternative splicing into isoform 3 is required in mechanosensory hair cells in the inner ear for derepression of neuronal genes and hearing. This is RE1-silencing transcription factor (REST) from Homo sapiens (Human).